The sequence spans 142 residues: SLSDKDKAAVKAIWNKISKSADVIGADAMGRMLVVYPQTKTYFSHWSDLSPNSAPVKNHGKTVMTGVALAVSNIDDMTTGLKALSEKHAFQLRVDPSNFKILSHCILVVIAMMYPKDFTPEAHVSMDKFFCGLSLALAEKYR.

At serine 1 the chain carries N-acetylserine. A Globin domain is found at 1 to 142 (SLSDKDKAAV…LSLALAEKYR (142 aa)). Heme b contacts are provided by histidine 59 and histidine 88.

It belongs to the globin family. As to quaternary structure, heterotetramer of two alpha chains and two beta chains. In terms of tissue distribution, red blood cells.

Functionally, involved in oxygen transport from gills to the various peripheral tissues. This Lycodes reticulatus (Arctic eelpout) protein is Hemoglobin subunit alpha.